We begin with the raw amino-acid sequence, 325 residues long: DNA-directed RNA polymerase subunit alpha (325 aa).

The alpha N-terminal domain (alpha-NTD) stretch occupies residues 1 to 231 (MQTSLLKPKI…DQLSVFAALE (231 aa)). The alpha C-terminal domain (alpha-CTD) stretch occupies residues 246-325 (IDPILLRPVD…ENWPPAGLDK (80 aa)).

It belongs to the RNA polymerase alpha chain family. Homodimer. The RNAP catalytic core consists of 2 alpha, 1 beta, 1 beta' and 1 omega subunit. When a sigma factor is associated with the core the holoenzyme is formed, which can initiate transcription.

It catalyses the reaction RNA(n) + a ribonucleoside 5'-triphosphate = RNA(n+1) + diphosphate. In terms of biological role, DNA-dependent RNA polymerase catalyzes the transcription of DNA into RNA using the four ribonucleoside triphosphates as substrates. This Burkholderia thailandensis (strain ATCC 700388 / DSM 13276 / CCUG 48851 / CIP 106301 / E264) protein is DNA-directed RNA polymerase subunit alpha.